Here is a 64-residue protein sequence, read N- to C-terminus: Conotoxin VnMLCL-042 (64 aa).

The first 19 residues, 1-19 (MLCLPVFIILLLLASPAAP), serve as a signal peptide directing secretion. Positions 20-43 (NPLQTRIQSNLIRAGPEDANMKTD) are excised as a propeptide. Methionine 63 is subject to Methionine amide.

The protein belongs to the conotoxin T superfamily. As to expression, expressed by the venom duct.

Its subcellular location is the secreted. The chain is Conotoxin VnMLCL-042 from Conus ventricosus (Mediterranean cone).